The following is a 142-amino-acid chain: Ribosome-binding factor A (142 aa).

Over residues 118 to 130 (DKAKQKQAGREDD) the composition is skewed to basic and acidic residues. The tract at residues 118 to 142 (DKAKQKQAGREDDTPSVDEQEKDTD) is disordered. A compositionally biased stretch (acidic residues) spans 131–142 (TPSVDEQEKDTD).

Belongs to the RbfA family. Monomer. Binds 30S ribosomal subunits, but not 50S ribosomal subunits or 70S ribosomes.

Its subcellular location is the cytoplasm. Its function is as follows. One of several proteins that assist in the late maturation steps of the functional core of the 30S ribosomal subunit. Associates with free 30S ribosomal subunits (but not with 30S subunits that are part of 70S ribosomes or polysomes). Required for efficient processing of 16S rRNA. May interact with the 5'-terminal helix region of 16S rRNA. In Shewanella denitrificans (strain OS217 / ATCC BAA-1090 / DSM 15013), this protein is Ribosome-binding factor A.